The sequence spans 544 residues: High affinity immunoglobulin alpha and immunoglobulin mu Fc receptor (544 aa).

The signal sequence occupies residues 1-16 (MPLFLILCLLQGSSFA). Topologically, residues 17–462 (LPQKRPHPRW…TFPEDESSSR (446 aa)) are extracellular. One can recognise an Ig-like V-type domain in the interval 61 to 169 (PNALKGSRLV…NMLFLSMNLT (109 aa)). Residues 75–97 (GGAVTIQCHYAPSSVNRHQRKYW) are mediates immunoglobulin Fc fragment-binding. A disulfide bridge connects residues Cys82 and Cys153. The N-linked (GlcNAc...) asparagine glycan is linked to Asn167. Residues 218–325 (DTVASTPGTS…TTKADRPRED (108 aa)) are disordered. Polar residues-rich tracts occupy residues 220–232 (VAST…TTAS) and 280–291 (ASKSRSMSNTTE). The span at 307 to 325 (ASKDRREITTTKADRPRED) shows a compositional bias: basic and acidic residues. The helical transmembrane segment at 463 to 483 (TLAPVSTMLALFMLMALVLLQ) threads the bilayer. The Cytoplasmic portion of the chain corresponds to 484-544 (RKLRRRRTSQ…LTAPERNPGP (61 aa)). Residues 511–544 (PQPDQLPHVERKMLQDDSLPAGASLTAPERNPGP) are disordered.

In terms of assembly, interacts with IGHM; this interaction facilitates the endocytosis of IgM-coated microbes or IgM-antigen immune complexes. N-glycosylated.

Its subcellular location is the cell membrane. Functionally, functions as a receptor for the Fc fragment of IgA and IgM. Binds IgA and IgM with high affinity and mediates their endocytosis. May function in the immune response to microbes mediated by IgA and IgM. In Pongo abelii (Sumatran orangutan), this protein is High affinity immunoglobulin alpha and immunoglobulin mu Fc receptor (FCAMR).